An 84-amino-acid chain; its full sequence is Putative antitoxin RelB4 (84 aa).

Functionally, antitoxin component of a type II toxin-antitoxin (TA) system. Its cognate toxin is RelE4 (Potential). The protein is Putative antitoxin RelB4 (relB4) of Methanocaldococcus jannaschii (strain ATCC 43067 / DSM 2661 / JAL-1 / JCM 10045 / NBRC 100440) (Methanococcus jannaschii).